Here is a 254-residue protein sequence, read N- to C-terminus: Small ribosomal subunit protein uS3 (254 aa).

One can recognise a KH type-2 domain in the interval 39–109 (IRNYISARLK…EVKIDVIEVI (71 aa)). The segment at 220 to 254 (EEMKKMQERRNDSRGRGRGDGRGAKRRRRPAAKKA) is disordered. The span at 221–242 (EMKKMQERRNDSRGRGRGDGRG) shows a compositional bias: basic and acidic residues. The span at 243 to 254 (AKRRRRPAAKKA) shows a compositional bias: basic residues.

Belongs to the universal ribosomal protein uS3 family. In terms of assembly, part of the 30S ribosomal subunit. Forms a tight complex with proteins S10 and S14.

In terms of biological role, binds the lower part of the 30S subunit head. Binds mRNA in the 70S ribosome, positioning it for translation. The protein is Small ribosomal subunit protein uS3 of Chlorobaculum parvum (strain DSM 263 / NCIMB 8327) (Chlorobium vibrioforme subsp. thiosulfatophilum).